The chain runs to 1053 residues: DIS3-like exonuclease 1 (1053 aa).

Positions 236-310 (AGIKSGRYIQ…KSEWKGRTAA (75 aa)) constitute a CSD1 domain. Residues 306-332 (GRTAALGENDSDDKASGESPSEPMPTG) are disordered. One can recognise a CSD2 domain in the interval 365 to 431 (ILVTPWDYRI…GEIATILVEN (67 aa)). An RNB domain is found at 465–816 (RKDLRTTHLV…VHRLLMAAIS (352 aa)). Ser989 bears the Phosphoserine mark.

It belongs to the RNR ribonuclease family. In terms of assembly, component of the RNA exosome complex. The catalytically inactive RNA exosome core (Exo-9) complex is believed to associate with catalytic subunits EXOSC10, and DIS3 or DIS3L in cytoplasmic- and nuclear-specific RNA exosome complex forms. The cofactor is Mg(2+).

Its subcellular location is the cytoplasm. It catalyses the reaction Exonucleolytic cleavage in the 3'- to 5'-direction to yield nucleoside 5'-phosphates.. In terms of biological role, catalytic component of the RNA exosome complex which has 3'-&gt;5' exoribonuclease activity and participates in a multitude of cellular RNA processing and degradation events. In the cytoplasm, the RNA exosome complex is involved in general mRNA turnover and specifically degrades inherently unstable mRNAs containing AU-rich elements (AREs) within their 3' untranslated regions, and in RNA surveillance pathways, preventing translation of aberrant mRNAs. It seems to be involved in degradation of histone mRNA. The chain is DIS3-like exonuclease 1 (Dis3l) from Mus musculus (Mouse).